The following is an 89-amino-acid chain: Small ribosomal subunit protein uS17 (89 aa).

It belongs to the universal ribosomal protein uS17 family. As to quaternary structure, part of the 30S ribosomal subunit.

Its function is as follows. One of the primary rRNA binding proteins, it binds specifically to the 5'-end of 16S ribosomal RNA. The protein is Small ribosomal subunit protein uS17 of Bdellovibrio bacteriovorus (strain ATCC 15356 / DSM 50701 / NCIMB 9529 / HD100).